Here is a 412-residue protein sequence, read N- to C-terminus: MKVRIRGIYATALTKLFLDNGFEIVQATPQISDRFSLPIRAEPSDVTIKDGNDKGELISIGEDIYSFLRKTFQNSFIWKSPVRLYSVIETNNCKFMDYQVEPCLDKGLVVKPPSEGRIILSSPKAVGKYSMVWRGDGKTFFSEHIRDREEKTRLLSISIPFNKKGYNVKWRSNAPFASNIVLKEELEKLAIRFDNNDFRQQGEDFIKVTVSLEDKIMLDEIRKKVLPNTIRFHHMLKMSFSNEVDEIEQTSMNNEELLDKLITDYMGIEHIKPDGRKFELKEGKVIYKEVNSDYYIVRLMRVFSREGIYDGLNVKKEEGDYDIVEFDSRKWYQIHRYYNKDGKLKGIYVNISTPPELLRGKLRYLDLEVDVVKVGDEVRIIDLEELEKNKEIIGETMYKKIFTIIEEVKKIL.

Belongs to the FAU-1 family.

Probable RNase involved in rRNA stability through maturation and/or degradation of precursor rRNAs. Binds to RNA in loop regions with AU-rich sequences. In Sulfurisphaera tokodaii (strain DSM 16993 / JCM 10545 / NBRC 100140 / 7) (Sulfolobus tokodaii), this protein is Probable ribonuclease FAU-1.